Reading from the N-terminus, the 49-residue chain is Disintegrin echistatin-gamma (49 aa).

Positions 1–47 (DCASGPCCRDCKFLEEGTICNMARGDDMDDYCNGKTCDCPRNPHKWP) constitute a Disintegrin domain. 4 cysteine pairs are disulfide-bonded: Cys-2/Cys-11, Cys-7/Cys-32, Cys-8/Cys-37, and Cys-20/Cys-39. The short motif at 24 to 26 (RGD) is the Cell attachment site element.

This sequence belongs to the venom metalloproteinase (M12B) family. P-II subfamily. P-IIa sub-subfamily. In terms of assembly, monomer. In terms of tissue distribution, expressed by the venom gland.

It localises to the secreted. In terms of biological role, has antiplatelet activities on guinea pig, followed by human, rabbit and rat platelet-rich plasma. The protein is Disintegrin echistatin-gamma of Echis pyramidum leakeyi (Leakey's carpet viper).